An 81-amino-acid chain; its full sequence is Exodeoxyribonuclease 7 small subunit (81 aa).

This sequence belongs to the XseB family. As to quaternary structure, heterooligomer composed of large and small subunits.

It is found in the cytoplasm. It carries out the reaction Exonucleolytic cleavage in either 5'- to 3'- or 3'- to 5'-direction to yield nucleoside 5'-phosphates.. Its function is as follows. Bidirectionally degrades single-stranded DNA into large acid-insoluble oligonucleotides, which are then degraded further into small acid-soluble oligonucleotides. This Rhodopseudomonas palustris (strain BisA53) protein is Exodeoxyribonuclease 7 small subunit.